The chain runs to 79 residues: uncharacterized protein (79 aa).

An N-terminal signal peptide occupies residues 1 to 18; that stretch reads MQIKNIVAVLATVTAINA. The disordered stretch occupies residues 24-44; sequence PNATTPNATQPNATQPNTTLP. Residues N25, N30, N35, and N40 are each glycosylated (N-linked (GlcNAc...) asparagine). G55 carries the GPI-anchor amidated glycine lipid modification. Residues 56–79 constitute a propeptide, removed in mature form; it reads EAVVNTMAAGAFGAAIAAGVAFLF.

The protein localises to the cell membrane. This is an uncharacterized protein from Saccharomyces cerevisiae (strain ATCC 204508 / S288c) (Baker's yeast).